A 261-amino-acid polypeptide reads, in one-letter code: Transmembrane and immunoglobulin domain-containing protein 1 (261 aa).

Residues 1–27 form the signal peptide; the sequence is MAQKTSGLIQRCRFLLLMILFLPHVMT. Positions 28 to 114 constitute an Ig-like C2-type 1 domain; sequence SSVLSVNGKT…LQRNQSVSIS (87 aa). Residues 28-219 are Extracellular-facing; it reads SSVLSVNGKT…IVKDKGSTVP (192 aa). C54 and C103 are joined by a disulfide. Residues N83, N108, N118, and N189 are each glycosylated (N-linked (GlcNAc...) asparagine). Residues 122–208 enclose the Ig-like C2-type 2 domain; sequence PPLLSGNDFQ…LIETKTKDFH (87 aa). Cysteines 143 and 194 form a disulfide. Residues 220–240 form a helical membrane-spanning segment; sequence IEPIIAACVVVFLTLVFGVIA. Over 241 to 261 the chain is Cytoplasmic; the sequence is RRKRIMKLCRKDQGPQCRTAL.

In terms of assembly, homodimer. N-glycosylated.

It localises to the cell membrane. The protein localises to the cytoplasm. May control cell-cell adhesion, cell migration and proliferation, cell morphology, and protects renal epithelial cells from oxidative cell injury to promote cell survival. In Bos taurus (Bovine), this protein is Transmembrane and immunoglobulin domain-containing protein 1.